The sequence spans 1197 residues: DNA-directed RNA polymerase subunit beta (1197 aa).

Basic and acidic residues predominate over residues 1172–1185 (KEQEEKKAQQEAEK). The interval 1172-1197 (KEQEEKKAQQEAEKAQAASAEDPSAE) is disordered. Over residues 1186 to 1197 (AQAASAEDPSAE) the composition is skewed to low complexity.

This sequence belongs to the RNA polymerase beta chain family. As to quaternary structure, the RNAP catalytic core consists of 2 alpha, 1 beta, 1 beta' and 1 omega subunit. When a sigma factor is associated with the core the holoenzyme is formed, which can initiate transcription.

It catalyses the reaction RNA(n) + a ribonucleoside 5'-triphosphate = RNA(n+1) + diphosphate. Its function is as follows. DNA-dependent RNA polymerase catalyzes the transcription of DNA into RNA using the four ribonucleoside triphosphates as substrates. In Latilactobacillus sakei subsp. sakei (strain 23K) (Lactobacillus sakei subsp. sakei), this protein is DNA-directed RNA polymerase subunit beta.